Consider the following 418-residue polypeptide: Serpin A3-8 (418 aa).

An N-terminal signal peptide occupies residues 1 to 25; that stretch reads MRAERMSPLLALGLLVSGLCSRVHC. 4 N-linked (GlcNAc...) asparagine glycosylation sites follow: N103, N183, N233, and N268.

Belongs to the serpin family. As to quaternary structure, homodimer.

It is found in the cytoplasmic vesicle. It localises to the secretory vesicle. The protein resides in the chromaffin granule. The protein localises to the secreted. Functionally, serine protease inhibitor. This chain is Serpin A3-8, found in Bos taurus (Bovine).